The primary structure comprises 835 residues: Protein translocase subunit SecA (835 aa).

Residues Q85, 103–107 (GEGKT), and D492 contribute to the ATP site. Zn(2+) contacts are provided by C819, C821, C830, and C831.

Belongs to the SecA family. Monomer and homodimer. Part of the essential Sec protein translocation apparatus which comprises SecA, SecYEG and auxiliary proteins SecDF. Other proteins may also be involved. Requires Zn(2+) as cofactor.

It is found in the cell membrane. The protein localises to the cytoplasm. It carries out the reaction ATP + H2O + cellular proteinSide 1 = ADP + phosphate + cellular proteinSide 2.. Functionally, part of the Sec protein translocase complex. Interacts with the SecYEG preprotein conducting channel. Has a central role in coupling the hydrolysis of ATP to the transfer of proteins into and across the cell membrane, serving as an ATP-driven molecular motor driving the stepwise translocation of polypeptide chains across the membrane. The protein is Protein translocase subunit SecA of Clostridium botulinum (strain Kyoto / Type A2).